The following is a 226-amino-acid chain: 7-cyano-7-deazaguanine synthase (226 aa).

10–20 (LSGGLDSATAA) is an ATP binding site. Zn(2+) contacts are provided by C191, C199, C202, and C205.

It belongs to the QueC family. Zn(2+) is required as a cofactor.

It carries out the reaction 7-carboxy-7-deazaguanine + NH4(+) + ATP = 7-cyano-7-deazaguanine + ADP + phosphate + H2O + H(+). Its pathway is purine metabolism; 7-cyano-7-deazaguanine biosynthesis. Its function is as follows. Catalyzes the ATP-dependent conversion of 7-carboxy-7-deazaguanine (CDG) to 7-cyano-7-deazaguanine (preQ(0)). In Synechococcus sp. (strain CC9605), this protein is 7-cyano-7-deazaguanine synthase.